Consider the following 202-residue polypeptide: LexA repressor (202 aa).

Active-site for autocatalytic cleavage activity residues include serine 123 and lysine 159.

This sequence belongs to the peptidase S24 family. Homodimer.

It carries out the reaction Hydrolysis of Ala-|-Gly bond in repressor LexA.. Functionally, binds the consensus sequence 5'-TGTTC-N(4)-GAACA-3'; some genes have a tandem consensus sequence, at high concentrations their binding is cooperative. Binds to the promoters of a number of genes, including dinB, imuA, lexA, recA, recQ, splB and uvrA. Represses a number of genes involved in the response to DNA damage (SOS response). In the presence of single-stranded DNA, RecA interacts with LexA causing an autocatalytic cleavage which disrupts the DNA-binding part of LexA, leading to derepression of the SOS regulon and eventually DNA repair. This is LexA repressor from Verrucomicrobium spinosum (strain ATCC 43997 / DSM 4136 / JCM 18804 / IFAM 1439).